We begin with the raw amino-acid sequence, 80 residues long: uncharacterized protein (80 aa).

This is an uncharacterized protein from Enterobacteria phage T4 (Bacteriophage T4).